The chain runs to 353 residues: MDLEASLLPTGPNASNTSDGPDNLTSAGSPPRTGSISYINIIMPSVFGTICLLGIIGNSTVIFAVVKKSKLHWCNNVPDIFIINLSVVDLLFLLGMPFMIHQLMGNGVWHFGETMCTLITAMDANSQFTSTYILTAMAIDRYLATVHPISSTKFRKPSVATLVICLLWALSFISITPVWLYARLIPFPGGAVGCGIRLPNPDTDLYWFTLYQFFLAFALPFVVITAAYVRILQRMTSSVAPASQRSIRLRTKRVTRTAIAICLVFFVCWAPYYVLQLTQLSISRPTLTFVYLYNAAISLGYANSCLNPFVYIVLCETFRKRLVLSVKPAAQGQLRAVSNAQTADEERTESKGT.

The disordered stretch occupies residues 1-29; the sequence is MDLEASLLPTGPNASNTSDGPDNLTSAGS. Topologically, residues 1 to 44 are extracellular; that stretch reads MDLEASLLPTGPNASNTSDGPDNLTSAGSPPRTGSISYINIIMP. Residues 12-29 are compositionally biased toward polar residues; sequence PNASNTSDGPDNLTSAGS. N-linked (GlcNAc...) asparagine glycans are attached at residues N13, N16, and N23. The helical transmembrane segment at 45–67 threads the bilayer; that stretch reads SVFGTICLLGIIGNSTVIFAVVK. Over 68–79 the chain is Cytoplasmic; sequence KSKLHWCNNVPD. A helical membrane pass occupies residues 80 to 102; the sequence is IFIINLSVVDLLFLLGMPFMIHQ. Residues 103–116 lie on the Extracellular side of the membrane; it reads LMGNGVWHFGETMC. C116 and C194 are oxidised to a cystine. Residues 117–139 form a helical membrane-spanning segment; that stretch reads TLITAMDANSQFTSTYILTAMAI. Residues 140–158 are Cytoplasmic-facing; that stretch reads DRYLATVHPISSTKFRKPS. A helical membrane pass occupies residues 159 to 181; that stretch reads VATLVICLLWALSFISITPVWLY. Residues 182 to 209 lie on the Extracellular side of the membrane; the sequence is ARLIPFPGGAVGCGIRLPNPDTDLYWFT. Residues 210–232 form a helical membrane-spanning segment; sequence LYQFFLAFALPFVVITAAYVRIL. Topologically, residues 233–252 are cytoplasmic; it reads QRMTSSVAPASQRSIRLRTK. A helical membrane pass occupies residues 253–275; the sequence is RVTRTAIAICLVFFVCWAPYYVL. The Extracellular portion of the chain corresponds to 276–289; the sequence is QLTQLSISRPTLTF. The helical transmembrane segment at 290-312 threads the bilayer; that stretch reads VYLYNAAISLGYANSCLNPFVYI. Residues 313–353 are Cytoplasmic-facing; it reads VLCETFRKRLVLSVKPAAQGQLRAVSNAQTADEERTESKGT.

It belongs to the G-protein coupled receptor 1 family. Interacts with NCDN. In terms of tissue distribution, highest level in brain, particularly in the frontal cortex and hypothalamus, lower levels in the liver and heart.

The protein resides in the cell membrane. Functionally, receptor for melanin-concentrating hormone, coupled to both G proteins that inhibit adenylyl cyclase and G proteins that activate phosphoinositide hydrolysis. The polypeptide is Melanin-concentrating hormone receptor 1 (Homo sapiens (Human)).